The following is a 568-amino-acid chain: SLAIN motif-containing protein 1 (568 aa).

Disordered stretches follow at residues 1 to 22, 59 to 92, 139 to 162, 235 to 256, and 291 to 403; these read MMAE…SGPV, LLLL…TAAA, GGGP…SPPP, YTSR…STSE, and STSA…LRRS. Residues 21 to 56 are a coiled coil; the sequence is PVVNAELEVKKLQELVRKLEKQNEQLRSRAASAAAA. Residues 62 to 74 show a composition bias toward pro residues; it reads LPPPPPAAPPPAG. The segment covering 75 to 92 has biased composition (low complexity); the sequence is LQPLGPRSPPAATATAAA. Over residues 139-149 the composition is skewed to gly residues; that stretch reads GGGPEPGGAGT. The segment covering 235–245 has biased composition (polar residues); it reads YTSRGSPLSPQ. S243 is modified (phosphoserine). Low complexity-rich tracts occupy residues 246-255 and 291-307; these read SSIDSELSTS and STSA…SLSS. The span at 316-329 shows a compositional bias: acidic residues; that stretch reads QEYDQYSLEDEEEF. The span at 366 to 384 shows a compositional bias: low complexity; that stretch reads SSQYFPSNNYQQQQYYSPQ. A compositionally biased stretch (polar residues) spans 385–395; it reads AQTPDQQPNRT. Residues R471 and R543 each carry the asymmetric dimethylarginine modification.

It belongs to the SLAIN motif-containing family. As to quaternary structure, interacts with MAPRE1, MAPRE2, MAPRE3 and CKAP5. Interacts with ZDHHC17 (via ANK repeats). In terms of tissue distribution, expressed in embryonic stem cells. Expressed in brain.

The protein resides in the cytoplasm. It is found in the cytoskeleton. In terms of biological role, microtubule plus-end tracking protein that might be involved in the regulation of cytoplasmic microtubule dynamics, microtubule organization and microtubule elongation. The protein is SLAIN motif-containing protein 1 (SLAIN1) of Homo sapiens (Human).